Here is a 366-residue protein sequence, read N- to C-terminus: uncharacterized protein (366 aa).

The OBG-type G domain occupies 64–289 (GTVGFIGFPS…LKETMWDYLN (226 aa)). GTP contacts are provided by residues 70–77 (GFPSVGKS), 116–120 (DLPGI), and 247–250 (NKID). Residues 289–365 (NLVRVYTRPR…LDEDVVTIVK (77 aa)) enclose the TGS domain.

It belongs to the TRAFAC class OBG-HflX-like GTPase superfamily. OBG GTPase family.

This is an uncharacterized protein from Schizosaccharomyces pombe (strain 972 / ATCC 24843) (Fission yeast).